The chain runs to 249 residues: 5'-nucleotidase SurE (249 aa).

Residues aspartate 8, aspartate 9, serine 39, and asparagine 91 each contribute to the a divalent metal cation site.

This sequence belongs to the SurE nucleotidase family. The cofactor is a divalent metal cation.

The protein localises to the cytoplasm. It carries out the reaction a ribonucleoside 5'-phosphate + H2O = a ribonucleoside + phosphate. In terms of biological role, nucleotidase that shows phosphatase activity on nucleoside 5'-monophosphates. This is 5'-nucleotidase SurE from Vesicomyosocius okutanii subsp. Calyptogena okutanii (strain HA).